Here is a 44-residue protein sequence, read N- to C-terminus: Endochitinase 1 (44 aa).

The protein belongs to the glycosyl hydrolase 19 family. Chitinase class I subfamily.

The catalysed reaction is Random endo-hydrolysis of N-acetyl-beta-D-glucosaminide (1-&gt;4)-beta-linkages in chitin and chitodextrins.. Functionally, defense against chitin-containing fungal pathogens. The polypeptide is Endochitinase 1 (Capsicum chinense (Scotch bonnet)).